Consider the following 306-residue polypeptide: Curved DNA-binding protein (306 aa).

The J domain occupies D5–W69.

Its subcellular location is the cytoplasm. The protein resides in the nucleoid. DNA-binding protein that preferentially recognizes a curved DNA sequence. It is probably a functional analog of DnaJ; displays overlapping activities with DnaJ, but functions under different conditions, probably acting as a molecular chaperone in an adaptive response to environmental stresses other than heat shock. Lacks autonomous chaperone activity; binds native substrates and targets them for recognition by DnaK. Its activity is inhibited by the binding of CbpM. This Escherichia coli O127:H6 (strain E2348/69 / EPEC) protein is Curved DNA-binding protein.